The chain runs to 445 residues: MTSVGIDAMEIWTGKLVLDLPNTFAPVKGEDPEKYTKGLGLHTSSFPDVYEDIVTMGANAAKKLMDRKGLTPADIGRIDVATESAFDNSKPVSTYIAGCLEQVYDGDFRHANKGERKFACIAGTQSLDDAYNWIKAGRNRGRAALVIATDTALYERGDPGEATQGAGAVAMLIDEDPDLVELSTEQGYGSMDETDFLKPNQQFPSVDGKRSMQVYLARMREALEDYESVAGRTHPDLFEYIPFHTPFPGMVRKAALLGFRHMTRDTDIEDDLESEIGRQPREEDFETWDDYEEAIRGYMDELKTTEQYRDWYGRVIEPTLDISSRVGNWYTGSVHIARLSALKAAADEGKDMTGKQLLVGSYGSGAQAEIHAERVQETWLDEIEAVDVDDQLAARTEISFDDYELIHDVHNHEKEIEVEEFTQPEAEFVFTGWGRMNERRYEYVE.

Residue Asp31 coordinates (3S)-3-hydroxy-3-methylglutaryl-CoA. The active-site Proton donor/acceptor is the Glu83. (3S)-3-hydroxy-3-methylglutaryl-CoA-binding residues include Cys120, Thr163, Ser211, His244, Lys253, Asn328, and Ser364. The active-site Acyl-thioester intermediate is Cys120. Catalysis depends on His244, which acts as the Proton donor/acceptor.

The protein belongs to the thiolase-like superfamily. HMG-CoA synthase family.

The enzyme catalyses acetoacetyl-CoA + acetyl-CoA + H2O = (3S)-3-hydroxy-3-methylglutaryl-CoA + CoA + H(+). It functions in the pathway metabolic intermediate biosynthesis; (R)-mevalonate biosynthesis; (R)-mevalonate from acetyl-CoA: step 2/3. With respect to regulation, in contrast to bacterial and eukaryotic HMG-CoA synthases, is insensitive to feedback substrate inhibition by acetoacetyl-CoA. Enzymatic activity is inhibited by hymeglusin, which also blocks the propagation of H.volcanii cells in vivo, indicating the critical role that the mevalonate pathway plays in isoprenoid biosynthesis by these archaea. Functionally, catalyzes the condensation of acetyl-CoA with acetoacetyl-CoA to form 3-hydroxy-3-methylglutaryl-CoA (HMG-CoA). Functions in the mevalonate (MVA) pathway leading to isopentenyl diphosphate (IPP), a key precursor for the biosynthesis of isoprenoid compounds such as archaeal membrane lipids. The protein is Hydroxymethylglutaryl-CoA synthase (hmgB) of Haloferax volcanii (strain ATCC 29605 / DSM 3757 / JCM 8879 / NBRC 14742 / NCIMB 2012 / VKM B-1768 / DS2) (Halobacterium volcanii).